A 327-amino-acid chain; its full sequence is 2-methoxy-6-polyprenyl-1,4-benzoquinol methylase, mitochondrial (327 aa).

Residues 1–49 (MAAPRSCALWSYCGRGWSWAMRGCQLLGLRSSWPGAPLSARLLPQEKRA) constitute a mitochondrion transit peptide. S-adenosyl-L-methionine contacts are provided by residues threonine 117, aspartate 171, and 199–200 (DA).

Belongs to the class I-like SAM-binding methyltransferase superfamily. MenG/UbiE family. In terms of assembly, component of a multi-subunit COQ enzyme complex, composed of at least COQ3, COQ4, COQ5, COQ6, COQ7 and COQ9. Interacts with PYURF; the interaction is direct, stabilizes COQ5 protein and associates PYURF with COQ enzyme complex.

Its subcellular location is the mitochondrion inner membrane. The enzyme catalyses 2-methoxy-6-(all-trans-decaprenyl)benzene-1,4-diol + S-adenosyl-L-methionine = 5-methoxy-2-methyl-3-(all-trans-decaprenyl)benzene-1,4-diol + S-adenosyl-L-homocysteine + H(+). It participates in cofactor biosynthesis; ubiquinone biosynthesis. Methyltransferase required for the conversion of 2-decaprenyl-6-methoxy-1,4-benzoquinol (DDMQH2) to 2-decaprenyl-3-methyl-6-methoxy-1,4-benzoquinol (DMQH2). This is 2-methoxy-6-polyprenyl-1,4-benzoquinol methylase, mitochondrial from Pongo abelii (Sumatran orangutan).